Reading from the N-terminus, the 239-residue chain is Uridylate kinase (239 aa).

13–16 is a binding site for ATP; the sequence is KLSG. Glycine 55 serves as a coordination point for UMP. The ATP site is built by glycine 56 and arginine 60. UMP contacts are provided by residues aspartate 75 and 136-143; that span reads TGNPFFTT. The ATP site is built by threonine 163, asparagine 164, tyrosine 169, and aspartate 172.

This sequence belongs to the UMP kinase family. In terms of assembly, homohexamer.

The protein localises to the cytoplasm. It carries out the reaction UMP + ATP = UDP + ADP. It participates in pyrimidine metabolism; CTP biosynthesis via de novo pathway; UDP from UMP (UMPK route): step 1/1. Its activity is regulated as follows. Inhibited by UTP. In terms of biological role, catalyzes the reversible phosphorylation of UMP to UDP. In Neisseria gonorrhoeae (strain ATCC 700825 / FA 1090), this protein is Uridylate kinase.